A 343-amino-acid polypeptide reads, in one-letter code: L-threonine 3-dehydrogenase (343 aa).

Cysteine 40 is a Zn(2+) binding site. Active-site charge relay system residues include threonine 42 and histidine 45. Residues histidine 65, glutamate 66, cysteine 95, cysteine 98, cysteine 101, and cysteine 109 each coordinate Zn(2+). NAD(+) is bound by residues isoleucine 177, aspartate 197, arginine 202, 264–266, and 288–289; these read LGI and IY.

Belongs to the zinc-containing alcohol dehydrogenase family. In terms of assembly, homotetramer. Zn(2+) is required as a cofactor.

It is found in the cytoplasm. The enzyme catalyses L-threonine + NAD(+) = (2S)-2-amino-3-oxobutanoate + NADH + H(+). It functions in the pathway amino-acid degradation; L-threonine degradation via oxydo-reductase pathway; glycine from L-threonine: step 1/2. Its function is as follows. Catalyzes the NAD(+)-dependent oxidation of L-threonine to 2-amino-3-ketobutyrate. This is L-threonine 3-dehydrogenase from Photobacterium profundum (strain SS9).